A 174-amino-acid polypeptide reads, in one-letter code: NADH-ubiquinone oxidoreductase chain 6 (174 aa).

The next 5 membrane-spanning stretches (helical) occupy residues 1–21 (MTYVLFTLSVMLVMGFVGFSS), 24–44 (SPIYGGLALVVSGVVGCMIIL), 47–67 (GGAYLGLVMFLIYLGGMMVVF), 86–106 (FEVLACFLVGLMMEVGLVLWV), and 151–171 (WLVVVAGWTLFVGVYVVIEIT).

Belongs to the complex I subunit 6 family. Core subunit of respiratory chain NADH dehydrogenase (Complex I) which is composed of 45 different subunits.

The protein localises to the mitochondrion inner membrane. It catalyses the reaction a ubiquinone + NADH + 5 H(+)(in) = a ubiquinol + NAD(+) + 4 H(+)(out). Core subunit of the mitochondrial membrane respiratory chain NADH dehydrogenase (Complex I) which catalyzes electron transfer from NADH through the respiratory chain, using ubiquinone as an electron acceptor. Essential for the catalytic activity and assembly of complex I. This is NADH-ubiquinone oxidoreductase chain 6 (MT-ND6) from Papio hamadryas (Hamadryas baboon).